The sequence spans 255 residues: RNA polymerase sigma-F factor (255 aa).

The Polymerase core binding signature appears at 61-74 (DLFQIGCIGLLKSV). A DNA-binding region (H-T-H motif) is located at residues 221 to 240 (QSEVADRLGISQVQVSRLEK).

Belongs to the sigma-70 factor family.

Its function is as follows. Sigma factors are initiation factors that promote the attachment of RNA polymerase to specific initiation sites and are then released. This sigma factor is responsible for the expression of sporulation specific genes. This is RNA polymerase sigma-F factor (sigF) from Bacillus licheniformis.